Consider the following 135-residue polypeptide: Small ribosomal subunit protein bS16 (135 aa).

Positions 106–135 (TERRQKRLVVKSRRRQAKKEAEGKAAGAEA) are disordered. Residues 109–122 (RQKRLVVKSRRRQA) are compositionally biased toward basic residues.

Belongs to the bacterial ribosomal protein bS16 family.

The protein is Small ribosomal subunit protein bS16 of Chlorobium phaeobacteroides (strain DSM 266 / SMG 266 / 2430).